The chain runs to 307 residues: Agmatinase (307 aa).

Mn(2+) is bound by residues histidine 128, aspartate 151, histidine 153, aspartate 155, aspartate 232, and aspartate 234.

This sequence belongs to the arginase family. Agmatinase subfamily. Requires Mn(2+) as cofactor.

The catalysed reaction is agmatine + H2O = urea + putrescine. Its pathway is amine and polyamine biosynthesis; putrescine biosynthesis via agmatine pathway; putrescine from agmatine: step 1/1. Its function is as follows. Catalyzes the formation of putrescine from agmatine. The sequence is that of Agmatinase from Neisseria meningitidis serogroup C (strain 053442).